Consider the following 247-residue polypeptide: DNA repair protein RecO (247 aa).

This sequence belongs to the RecO family.

Functionally, involved in DNA repair and RecF pathway recombination. The chain is DNA repair protein RecO from Alkalilimnicola ehrlichii (strain ATCC BAA-1101 / DSM 17681 / MLHE-1).